The chain runs to 363 residues: Homeobox protein Hox-A2 (363 aa).

Disordered stretches follow at residues 23–133 (TSFP…SRRL) and 183–216 (MKHK…DEEK). Polar residues-rich tracts occupy residues 31–46 (TFQS…SHST) and 55–78 (TIPS…NGTS). Residues 88 to 93 (EYPWMK) carry the Antp-type hexapeptide motif. A DNA-binding region (homeobox) is located at residues 130–189 (SRRLRTAYTNTQLLELEKEFHFNKYLCRPRRVEIAALLDLTERQVKVWFQNRRMKHKRQT).

This sequence belongs to the Antp homeobox family. Proboscipedia subfamily.

It is found in the nucleus. Sequence-specific transcription factor which is part of a developmental regulatory system that provides cells with specific positional identities on the anterior-posterior axis. This Heterodontus francisci (Horn shark) protein is Homeobox protein Hox-A2 (HOXA2).